Reading from the N-terminus, the 242-residue chain is Small ribosomal subunit protein uS7m (242 aa).

Residues 1–37 (MAAPTAKVSRGWSGLALGVRIAVLRLPGLTQVRWSRY) constitute a mitochondrion transit peptide. Lysine 228 carries the post-translational modification N6-acetyllysine.

The protein belongs to the universal ribosomal protein uS7 family. In terms of assembly, component of the mitochondrial ribosome small subunit (28S) which comprises a 12S rRNA and about 30 distinct proteins.

The protein localises to the mitochondrion. The sequence is that of Small ribosomal subunit protein uS7m (MRPS7) from Bos taurus (Bovine).